The following is a 215-amino-acid chain: MSNLKQKDSKPEVAVTKSVKTYKKSIEYVNSDASDIEEDINRAEDEYASSSGFVNFLRDFKKRYGEYYSNNEIRRAAETRWNEMSFRHRCQYSAEPLDTFHVEPNSVSSLQRSSEGEHRMHSEISGCADTFFGAGGSNSCTPRKENKCSKPRVRKSCPKPRAKTSKQRRSCGKPKPKGARPRKACPRPRKKMECGKAKAKPRCLKPKSSKPKCSM.

The tract at residues 140–215 (CTPRKENKCS…PKSSKPKCSM (76 aa)) is disordered. Composition is skewed to basic residues over residues 149-190 (SKPR…RPRK) and 197-215 (AKAK…KCSM).

Not known. Encoded in the intron of cAMP-dependent protein kinase regulatory chain type I. The chain is Histone-like protein 18C (Mst77F) from Drosophila melanogaster (Fruit fly).